The following is a 2167-amino-acid chain: Papilin (2167 aa).

Residues 1-19 (MRLLLFSAALLLCSVPTWA) form the signal peptide. The TSP type-1 1 domain occupies 76-123 (TGNWGPWVPENECSRSCGGGVQLEKRQCSGDCTGASVRYISCNLNACE). 3 disulfide bridges follow: Cys-88–Cys-117, Cys-92–Cys-122, and Cys-103–Cys-107. Asn-268 carries an N-linked (GlcNAc...) asparagine glycan. 3 TSP type-1 domains span residues 341–402 (VDYM…VDCE), 404–459 (EWFT…TCNR), and 461–525 (ACPE…GPCE). Disulfide bonds link Cys-353–Cys-396, Cys-357–Cys-401, and Cys-368–Cys-382. Residues Asn-386 and Asn-445 are each glycosylated (N-linked (GlcNAc...) asparagine). N-linked (GlcNAc...) asparagine glycans are attached at residues Asn-541, Asn-568, and Asn-638. 2 consecutive TSP type-1 domains span residues 585–643 (CEYE…TNEE) and 645–702 (CTGT…DDCP). N-linked (GlcNAc...) asparagine glycosylation is found at Asn-715, Asn-729, Asn-741, Asn-814, Asn-820, Asn-857, Asn-933, and Asn-1090. Intrachain disulfides connect Cys-1089-Cys-1141, Cys-1099-Cys-1124, Cys-1116-Cys-1137, Cys-1150-Cys-1202, Cys-1161-Cys-1185, and Cys-1177-Cys-1198. BPTI/Kunitz inhibitor domains lie at 1089-1141 (CNQT…ETIC) and 1150-1202 (CYLP…SMFC). Residues 1239-1273 (QSAEQPQPQQPQQQQQQQQQQPQQPRQSMEDICRS) form a disordered region. Residues 1243–1263 (QPQPQQPQQQQQQQQQQPQQP) are compositionally biased toward low complexity. 3 cysteine pairs are disulfide-bonded: Cys-1271-Cys-1321, Cys-1280-Cys-1304, and Cys-1296-Cys-1317. The region spanning 1271-1321 (CRSRQDAGPCETYSDQWFYNAFSQECETFTYGGCGGNLNRFRSKDECEQRC) is the BPTI/Kunitz inhibitor 3 domain. The tract at residues 1332–1365 (ARQEQAQPAAQPAQPAQPSNIVSPPQQSASPVVV) is disordered. Disulfide bonds link Cys-1375-Cys-1425, Cys-1384-Cys-1408, Cys-1400-Cys-1421, Cys-1447-Cys-1497, Cys-1456-Cys-1480, Cys-1472-Cys-1493, Cys-1504-Cys-1554, Cys-1513-Cys-1537, and Cys-1529-Cys-1550. BPTI/Kunitz inhibitor domains are found at residues 1375 to 1425 (CHLN…ESLC), 1447 to 1497 (CDEA…KAAC), and 1504 to 1554 (CQLP…QARC). The disordered stretch occupies residues 1556–1615 (KDDQTTTTSQPEELPSLPLVQEDPQPRPAFSLKQSFAHSRRRDAPFARSVSARHHTPDSE). 9 cysteine pairs are disulfide-bonded: Cys-1621–Cys-1671, Cys-1630–Cys-1654, Cys-1646–Cys-1667, Cys-1731–Cys-1781, Cys-1740–Cys-1764, Cys-1756–Cys-1777, Cys-1790–Cys-1840, Cys-1799–Cys-1823, and Cys-1815–Cys-1836. BPTI/Kunitz inhibitor domains are found at residues 1621 to 1671 (CYAV…ETSC), 1731 to 1781 (CMLP…ERAC), and 1790 to 1840 (CELP…ESLC). Residue Asn-1848 is glycosylated (N-linked (GlcNAc...) asparagine). Cystine bridges form between Cys-1853/Cys-1903, Cys-1862/Cys-1886, Cys-1878/Cys-1899, Cys-1914/Cys-1964, Cys-1923/Cys-1947, and Cys-1939/Cys-1960. 2 consecutive BPTI/Kunitz inhibitor domains span residues 1853–1903 (CTLE…QQSC) and 1914–1964 (CTLR…FRRC). Residues Asn-1992, Asn-2087, and Asn-2133 are each glycosylated (N-linked (GlcNAc...) asparagine). The tract at residues 2075–2106 (RTTSRPMLTPSKNFSLGTPPTPSPSTVSTTPF) is disordered. Over residues 2078–2090 (SRPMLTPSKNFSL) the composition is skewed to polar residues. The region spanning 2124 to 2163 (TSNSCMDVGNASTCDLIVKNGLCGKKRYGTFCCHTCTRVH) is the PLAC domain.

It belongs to the papilin family. In terms of tissue distribution, localizes to the basement membranes of the gonad primordium, pharynx and intestine (at protein level). Expressed in head and CAN neurons, coelomocytes, body-wall muscles and anal depressor and sphincter and stomatointestinal muscles. Expressed Isoform a: is expressed in body wall muscles and distal cell tips. Isoform b: expressed in embryonic muscles.

The protein resides in the secreted. Its subcellular location is the extracellular space. It localises to the extracellular matrix. It is found in the basement membrane. Its function is as follows. Involved in pharynx morphogenesis probably by remodeling the basement membrane. Functionally, plays a role in embryogenesis, the second phase of distal cell tip migration and is required for distribution of the metalloproteinase, mig-17, during organogenesis. Plays a role in post embryonic distal cell tip migration. Essential extracellular matrix (ECM) protein required for hypodermal enclosure in the embryo. The protein is Papilin (mig-6) of Caenorhabditis elegans.